The following is a 458-amino-acid chain: tRNA modification GTPase MnmE (458 aa).

Positions 23, 87, and 126 each coordinate (6S)-5-formyl-5,6,7,8-tetrahydrofolate. The region spanning 224-380 (GLSMVIVGKP…LKSKIKDLFF (157 aa)) is the TrmE-type G domain. Asn234 provides a ligand contact to K(+). GTP contacts are provided by residues 234–239 (NVGKSS), 253–259 (TDIAGTT), and 278–281 (DTAG). Position 238 (Ser238) interacts with Mg(2+). Residues Thr253, Ile255, and Thr258 each contribute to the K(+) site. Thr259 lines the Mg(2+) pocket. Lys458 contacts (6S)-5-formyl-5,6,7,8-tetrahydrofolate.

This sequence belongs to the TRAFAC class TrmE-Era-EngA-EngB-Septin-like GTPase superfamily. TrmE GTPase family. Homodimer. Heterotetramer of two MnmE and two MnmG subunits. It depends on K(+) as a cofactor.

It localises to the cytoplasm. Exhibits a very high intrinsic GTPase hydrolysis rate. Involved in the addition of a carboxymethylaminomethyl (cmnm) group at the wobble position (U34) of certain tRNAs, forming tRNA-cmnm(5)s(2)U34. This Clostridium perfringens (strain ATCC 13124 / DSM 756 / JCM 1290 / NCIMB 6125 / NCTC 8237 / Type A) protein is tRNA modification GTPase MnmE.